Here is a 146-residue protein sequence, read N- to C-terminus: Large-conductance mechanosensitive channel (146 aa).

2 helical membrane passes run 14-34 (VLDL…VNSL) and 81-101 (GLFL…FLLV).

Belongs to the MscL family. In terms of assembly, homopentamer.

It localises to the cell membrane. Functionally, channel that opens in response to stretch forces in the membrane lipid bilayer. May participate in the regulation of osmotic pressure changes within the cell. The chain is Large-conductance mechanosensitive channel from Symbiobacterium thermophilum (strain DSM 24528 / JCM 14929 / IAM 14863 / T).